The chain runs to 243 residues: Probable HTH-type transcriptional regulator GfsR (243 aa).

The tract at residues 154 to 179 (AAVARPDTSGSATGRTGDSSPSLALS) is disordered. Polar residues predominate over residues 161–178 (TSGSATGRTGDSSPSLAL). Residues 171-236 (DSSPSLALSP…QALLRWLGHP (66 aa)) enclose the HTH luxR-type domain. A DNA-binding region (H-T-H motif) is located at residues 195–214 (VREIAVEMRLAEKTVRNYLS).

It participates in antibiotic biosynthesis. Probable DNA-binding protein that contributes to the control of expression of the biosynthesis operon of the 16-membered macrolide antibiotics FD-891 and FD-892. Might be a member of a two-component regulatory system; the putative sensor kinase gene is unknown. In Streptomyces halstedii, this protein is Probable HTH-type transcriptional regulator GfsR.